Here is a 215-residue protein sequence, read N- to C-terminus: Octanoyltransferase (215 aa).

Residues T31–E206 form the BPL/LPL catalytic domain. Substrate-binding positions include R70–H77, S137–G139, and G150–A152. Catalysis depends on C168, which acts as the Acyl-thioester intermediate.

The protein belongs to the LipB family.

It localises to the cytoplasm. The enzyme catalyses octanoyl-[ACP] + L-lysyl-[protein] = N(6)-octanoyl-L-lysyl-[protein] + holo-[ACP] + H(+). It participates in protein modification; protein lipoylation via endogenous pathway; protein N(6)-(lipoyl)lysine from octanoyl-[acyl-carrier-protein]: step 1/2. Functionally, catalyzes the transfer of endogenously produced octanoic acid from octanoyl-acyl-carrier-protein onto the lipoyl domains of lipoate-dependent enzymes. Lipoyl-ACP can also act as a substrate although octanoyl-ACP is likely to be the physiological substrate. The chain is Octanoyltransferase from Pseudomonas fluorescens (strain SBW25).